A 147-amino-acid polypeptide reads, in one-letter code: Large ribosomal subunit protein bL9 (147 aa).

Belongs to the bacterial ribosomal protein bL9 family.

In terms of biological role, binds to the 23S rRNA. The sequence is that of Large ribosomal subunit protein bL9 from Citrifermentans bemidjiense (strain ATCC BAA-1014 / DSM 16622 / JCM 12645 / Bem) (Geobacter bemidjiensis).